A 1706-amino-acid chain; its full sequence is 5'-3' exoribonuclease 1 (1706 aa).

Ser-1348 carries the phosphoserine modification. The tract at residues 1619–1706 (ENKEAQSSQA…VNFGVSKPSE (88 aa)) is disordered. The segment covering 1623–1642 (AQSSQATPVQTSQPDSSNIV) has biased composition (polar residues). Ser-1645 bears the Phosphoserine mark. Over residues 1647 to 1657 (RESSSASLKSS) the composition is skewed to low complexity. The span at 1658–1676 (PIAQPASSFQVETASQGHS) shows a compositional bias: polar residues. Residues 1677–1694 (ISHHKSTPISSSRRKSRK) are compositionally biased toward basic residues.

It belongs to the 5'-3' exonuclease family. Found in a mRNP complex with UPF1, UPF2, UPF3B and XRN1. Associates with alpha and beta tubulins. Interacts with DIS3L2. Interacts with ZC3HAV1 in an RNA-dependent manner. Interacts with ZFP36L1. Interacts with TRIM71 (via NHL repeats) in an RNA-dependent manner. Interacts with YTHDC2 (via ANK repeats). Interacts with DHX34; the interaction is RNA-independent. Expressed in heart, brain, pancreas, spleen, testis, osteogenic sarcoma (OGS) biopsy and primary cell lines.

Its subcellular location is the cytoplasm. Major 5'-3' exoribonuclease involved in mRNA decay. Required for the 5'-3'-processing of the G4 tetraplex-containing DNA and RNA substrates. The kinetic of hydrolysis is faster for G4 RNA tetraplex than for G4 DNA tetraplex and monomeric RNA tetraplex. Binds to RNA and DNA. Plays a role in replication-dependent histone mRNA degradation. May act as a tumor suppressor protein in osteogenic sarcoma (OGS). This chain is 5'-3' exoribonuclease 1, found in Homo sapiens (Human).